The following is a 316-amino-acid chain: MRNDWTFKEAKQIFNLPLLELLYKAQTIHRKYFDPNKIQISMLLNIKTGNCPENCGYCSQSSHYKTDLQKEPLVDIDTLISEAKKAKELGSTRFCMGAAWRSPLDKDLKIVCQMIEEVKKLGLETCVTLGFLKEHQIAMLKKAGLDFYNHNMNTSPEFYEHIATTHTFDDRLATLKAVRKFGIKLCSGGIIGLGETIDDRISMLLLLATLEEQPESVPINRFVKVAGTPLNPQSDIDPFDFVRIIALTRILMPKSYIRLAAGREQMSDELQTLCFMGGANSIFYGGRLLTTDGPQPEQDDLLFQKIGLEKVQTICH.

The 225-residue stretch at 36–260 folds into the Radical SAM core domain; the sequence is NKIQISMLLN…LMPKSYIRLA (225 aa). Positions 51, 55, and 58 each coordinate [4Fe-4S] cluster. Residues C95, C126, C186, and R258 each coordinate [2Fe-2S] cluster.

It belongs to the radical SAM superfamily. Biotin synthase family. As to quaternary structure, homodimer. [4Fe-4S] cluster is required as a cofactor. It depends on [2Fe-2S] cluster as a cofactor.

It carries out the reaction (4R,5S)-dethiobiotin + (sulfur carrier)-SH + 2 reduced [2Fe-2S]-[ferredoxin] + 2 S-adenosyl-L-methionine = (sulfur carrier)-H + biotin + 2 5'-deoxyadenosine + 2 L-methionine + 2 oxidized [2Fe-2S]-[ferredoxin]. It participates in cofactor biosynthesis; biotin biosynthesis; biotin from 7,8-diaminononanoate: step 2/2. Functionally, catalyzes the conversion of dethiobiotin (DTB) to biotin by the insertion of a sulfur atom into dethiobiotin via a radical-based mechanism. In Lawsonia intracellularis (strain PHE/MN1-00), this protein is Biotin synthase.